A 281-amino-acid polypeptide reads, in one-letter code: Bifunctional protein FolD (281 aa).

NADP(+) contacts are provided by residues G167–S169 and S192.

It belongs to the tetrahydrofolate dehydrogenase/cyclohydrolase family. In terms of assembly, homodimer.

The catalysed reaction is (6R)-5,10-methylene-5,6,7,8-tetrahydrofolate + NADP(+) = (6R)-5,10-methenyltetrahydrofolate + NADPH. The enzyme catalyses (6R)-5,10-methenyltetrahydrofolate + H2O = (6R)-10-formyltetrahydrofolate + H(+). The protein operates within one-carbon metabolism; tetrahydrofolate interconversion. Catalyzes the oxidation of 5,10-methylenetetrahydrofolate to 5,10-methenyltetrahydrofolate and then the hydrolysis of 5,10-methenyltetrahydrofolate to 10-formyltetrahydrofolate. This is Bifunctional protein FolD from Alcanivorax borkumensis (strain ATCC 700651 / DSM 11573 / NCIMB 13689 / SK2).